A 292-amino-acid polypeptide reads, in one-letter code: ATP synthase gamma chain (292 aa).

This sequence belongs to the ATPase gamma chain family. In terms of assembly, F-type ATPases have 2 components, CF(1) - the catalytic core - and CF(0) - the membrane proton channel. CF(1) has five subunits: alpha(3), beta(3), gamma(1), delta(1), epsilon(1). CF(0) has three main subunits: a, b and c.

It localises to the cell inner membrane. Functionally, produces ATP from ADP in the presence of a proton gradient across the membrane. The gamma chain is believed to be important in regulating ATPase activity and the flow of protons through the CF(0) complex. The sequence is that of ATP synthase gamma chain from Hydrogenobaculum sp. (strain Y04AAS1).